A 330-amino-acid polypeptide reads, in one-letter code: Phosphate acyltransferase (330 aa).

This sequence belongs to the PlsX family. As to quaternary structure, homodimer. Probably interacts with PlsY.

Its subcellular location is the cytoplasm. It carries out the reaction a fatty acyl-[ACP] + phosphate = an acyl phosphate + holo-[ACP]. Its pathway is lipid metabolism; phospholipid metabolism. Functionally, catalyzes the reversible formation of acyl-phosphate (acyl-PO(4)) from acyl-[acyl-carrier-protein] (acyl-ACP). This enzyme utilizes acyl-ACP as fatty acyl donor, but not acyl-CoA. The chain is Phosphate acyltransferase from Streptococcus pneumoniae (strain P1031).